A 128-amino-acid polypeptide reads, in one-letter code: uncharacterized protein (128 aa).

Residues Cys-10 and Cys-13 are joined by a disulfide bond.

This sequence belongs to the ArsC family.

This is an uncharacterized protein from Ureaplasma parvum serovar 3 (strain ATCC 700970).